The sequence spans 422 residues: 2-(3-amino-3-carboxypropyl)histidine synthase subunit 1 (422 aa).

Residues Cys128, Cys234, and Cys363 each coordinate [4Fe-4S] cluster.

Belongs to the DPH1/DPH2 family. DPH1 subfamily. Component of the 2-(3-amino-3-carboxypropyl)histidine synthase complex composed of DPH1, DPH2, DPH3 and a NADH-dependent reductase, predominantly CBR1. It depends on [4Fe-4S] cluster as a cofactor.

It is found in the cytoplasm. It carries out the reaction L-histidyl-[translation elongation factor 2] + S-adenosyl-L-methionine = 2-[(3S)-amino-3-carboxypropyl]-L-histidyl-[translation elongation factor 2] + S-methyl-5'-thioadenosine + H(+). Its pathway is protein modification; peptidyl-diphthamide biosynthesis. Catalyzes the first step of diphthamide biosynthesis, a post-translational modification of histidine which occurs in elongation factor 2. DPH1 and DPH2 transfer a 3-amino-3-carboxypropyl (ACP) group from S-adenosyl-L-methionine (SAM) to a histidine residue, the reaction is assisted by a reduction system comprising DPH3 and a NADH-dependent reductase, predominantly CBR1. This chain is 2-(3-amino-3-carboxypropyl)histidine synthase subunit 1 (DPH1), found in Kluyveromyces lactis (strain ATCC 8585 / CBS 2359 / DSM 70799 / NBRC 1267 / NRRL Y-1140 / WM37) (Yeast).